Reading from the N-terminus, the 303-residue chain is MILEDTDLPLSHEQPSYSQIKDVLDKIPTGEHLWDLPKYEEKIILNWLIKLLATNLEWITVEEERDYLVSTICERIAERSGRLAAPTRKREFSLSNGVSVVLREPTMTYNTLGFKTWGSAPLLSANLPKWEDLSNSINALELGAGTGLVGISAAIQLGWQVVCTDLPDIVENMQYNVDYNSELIQQYAGSVSCHVLDWMNPPDDDNRPSWLIKPFQRIIASDCIYETHFGELAIALFRKYLAKDGIVITEYPLRETHLEEIGVFEKGMDAAGFERQMGEEIGEEDFGSLYPVTCRWSRWKYHG.

Residues W117, 143 to 145 (GAG), D165, W198, and S221 each bind S-adenosyl-L-methionine.

It belongs to the class I-like SAM-binding methyltransferase superfamily. METTL21 family.

It is found in the cytoplasm. It localises to the nucleus. Its function is as follows. S-adenosyl-L-methionine-dependent protein-lysine N-methyltransferase that methylates elongation factor 2 and elongation factor 3A. This chain is Protein-lysine N-methyltransferase rrg1, found in Schizosaccharomyces pombe (strain 972 / ATCC 24843) (Fission yeast).